The sequence spans 599 residues: Sulfite reductase [NADPH] flavoprotein alpha-component (599 aa).

Residues 64–202 form the Flavodoxin-like domain; sequence ITIISASQTG…AASEWRARVV (139 aa). FMN is bound by residues 70–75, 117–120, and 153–162; these read SQTGNA, STQG, and LGDSSYEFFC. Positions 234 to 448 constitute an FAD-binding FR-type domain; the sequence is DAPLAASLSV…IEHNDNFRLP (215 aa). Residues Thr-322, Ala-356, 386-389, 404-406, Tyr-410, and 419-422 contribute to the FAD site; these read RLYS, TVG, and GGAS. Residues 519–520, 525–529, and Asp-561 contribute to the NADP(+) site; these read SR and KIYVQ. Position 599 (Tyr-599) interacts with FAD.

It belongs to the NADPH-dependent sulphite reductase flavoprotein subunit CysJ family. The protein in the N-terminal section; belongs to the flavodoxin family. This sequence in the C-terminal section; belongs to the flavoprotein pyridine nucleotide cytochrome reductase family. In terms of assembly, alpha(8)-beta(8). The alpha component is a flavoprotein, the beta component is a hemoprotein. FAD serves as cofactor. FMN is required as a cofactor.

The enzyme catalyses hydrogen sulfide + 3 NADP(+) + 3 H2O = sulfite + 3 NADPH + 4 H(+). Its pathway is sulfur metabolism; hydrogen sulfide biosynthesis; hydrogen sulfide from sulfite (NADPH route): step 1/1. Its function is as follows. Component of the sulfite reductase complex that catalyzes the 6-electron reduction of sulfite to sulfide. This is one of several activities required for the biosynthesis of L-cysteine from sulfate. The flavoprotein component catalyzes the electron flow from NADPH -&gt; FAD -&gt; FMN to the hemoprotein component. The sequence is that of Sulfite reductase [NADPH] flavoprotein alpha-component from Escherichia coli O6:K15:H31 (strain 536 / UPEC).